Consider the following 848-residue polypeptide: Alanine--tRNA ligase (848 aa).

4 residues coordinate Zn(2+): histidine 553, histidine 557, cysteine 654, and histidine 658.

It belongs to the class-II aminoacyl-tRNA synthetase family. It depends on Zn(2+) as a cofactor.

The protein localises to the cytoplasm. It catalyses the reaction tRNA(Ala) + L-alanine + ATP = L-alanyl-tRNA(Ala) + AMP + diphosphate. Catalyzes the attachment of alanine to tRNA(Ala) in a two-step reaction: alanine is first activated by ATP to form Ala-AMP and then transferred to the acceptor end of tRNA(Ala). Also edits incorrectly charged Ser-tRNA(Ala) and Gly-tRNA(Ala) via its editing domain. This chain is Alanine--tRNA ligase, found in Neorickettsia sennetsu (strain ATCC VR-367 / Miyayama) (Ehrlichia sennetsu).